We begin with the raw amino-acid sequence, 442 residues long: Tryptophan synthase beta chain 2 (442 aa).

Position 122 is an N6-(pyridoxal phosphate)lysine (Lys-122).

Belongs to the TrpB family. As to quaternary structure, tetramer of two alpha and two beta chains. Pyridoxal 5'-phosphate serves as cofactor.

The enzyme catalyses (1S,2R)-1-C-(indol-3-yl)glycerol 3-phosphate + L-serine = D-glyceraldehyde 3-phosphate + L-tryptophan + H2O. The protein operates within amino-acid biosynthesis; L-tryptophan biosynthesis; L-tryptophan from chorismate: step 5/5. Functionally, the beta subunit is responsible for the synthesis of L-tryptophan from indole and L-serine. The chain is Tryptophan synthase beta chain 2 (trpB2) from Methanosarcina acetivorans (strain ATCC 35395 / DSM 2834 / JCM 12185 / C2A).